Reading from the N-terminus, the 240-residue chain is MGDLWLLLLLPLSLAAFHGVKGCLECDPKFIEEVKSLLGKLVPPEVPGRTHMLERQMKEMIRLSFKVSHRDKMLRVLAVQKVVDLRTWLKIELDKLSKEKWKGVFILQGRLLDIRKNLDSKLEKLLKKFSEVACSEDCVVTEGPILDCWTCLRITSRCFRGEYCEEDDPKKAESREIGLFLILLAEGVILGGVLLLFHFCISHQRKMKAIRRSLKTYLEKKLEELMGIKDEKEKDFRGRE.

Residues 1-22 form the signal peptide; sequence MGDLWLLLLLPLSLAAFHGVKG. At 23-176 the chain is on the extracellular side; sequence CLECDPKFIE…DDPKKAESRE (154 aa). The chain crosses the membrane as a helical span at residues 177 to 197; it reads IGLFLILLAEGVILGGVLLLF. The Cytoplasmic segment spans residues 198–240; it reads HFCISHQRKMKAIRRSLKTYLEKKLEELMGIKDEKEKDFRGRE.

Belongs to the Izumo family. In terms of assembly, monomer and homodimer.

The protein localises to the cell membrane. This chain is Izumo sperm-egg fusion protein 3 (IZUMO3), found in Bos taurus (Bovine).